The following is a 92-amino-acid chain: Small ribosomal subunit protein uS19 (92 aa).

Belongs to the universal ribosomal protein uS19 family.

Functionally, protein S19 forms a complex with S13 that binds strongly to the 16S ribosomal RNA. This Xanthobacter autotrophicus (strain ATCC BAA-1158 / Py2) protein is Small ribosomal subunit protein uS19.